The chain runs to 297 residues: 3-methyl-2-oxobutanoate hydroxymethyltransferase (297 aa).

Residues 1–12 show a composition bias toward polar residues; the sequence is MSEQISEQSEQN. Residues 1 to 36 form a disordered region; sequence MSEQISEQSEQNVYGACPPVPAGESSPSAASAPRTK. Residues 22 to 33 show a composition bias toward low complexity; that stretch reads AGESSPSAASAP. 2 residues coordinate Mg(2+): aspartate 78 and aspartate 117. 3-methyl-2-oxobutanoate contacts are provided by residues 78-79, aspartate 117, and lysine 147; that span reads DS. A Mg(2+)-binding site is contributed by glutamate 149. The Proton acceptor role is filled by glutamate 215.

The protein belongs to the PanB family. As to quaternary structure, homodecamer; pentamer of dimers. Mg(2+) serves as cofactor.

Its subcellular location is the cytoplasm. The enzyme catalyses 3-methyl-2-oxobutanoate + (6R)-5,10-methylene-5,6,7,8-tetrahydrofolate + H2O = 2-dehydropantoate + (6S)-5,6,7,8-tetrahydrofolate. It functions in the pathway cofactor biosynthesis; (R)-pantothenate biosynthesis; (R)-pantoate from 3-methyl-2-oxobutanoate: step 1/2. Its function is as follows. Catalyzes the reversible reaction in which hydroxymethyl group from 5,10-methylenetetrahydrofolate is transferred onto alpha-ketoisovalerate to form ketopantoate. In Mycobacterium ulcerans (strain Agy99), this protein is 3-methyl-2-oxobutanoate hydroxymethyltransferase.